Consider the following 359-residue polypeptide: 4-galactosyl-N-acetylglucosaminide 3-alpha-L-fucosyltransferase 9 (359 aa).

Over 1 to 11 (MTSASKGILRP) the chain is Cytoplasmic. The helical; Signal-anchor for type II membrane protein transmembrane segment at 12–32 (FLIVCIILACSMVCLFIYIKP) threads the bilayer. The Lumenal portion of the chain corresponds to 33–359 (TNSWIFSPME…VGNLEKWFWN (327 aa)). The N-linked (GlcNAc...) asparagine glycan is linked to N62. The acceptor-binding stretch occupies residues 63 to 168 (ETTILIWVWP…RRDSDIQVPY (106 aa)). Q75 contacts a beta-D-galactosyl-(1-&gt;4)-N-acetyl-beta-D-glucosaminyl derivative. Disulfide bonds link C82–C335, C91–C338, and C190–C238. The N-linked (GlcNAc...) asparagine glycan is linked to N101. E137 provides a ligand contact to a beta-D-galactosyl-(1-&gt;4)-N-acetyl-beta-D-glucosaminyl derivative. Residue E137 is the Nucleophile of the active site. E137 contributes to the GDP-beta-L-fucose binding site. A glycan (N-linked (GlcNAc...) asparagine) is linked at N153. Positions 168, 192, 194, 195, 202, 226, 241, 246, 252, 255, and 256 each coordinate GDP-beta-L-fucose. Residues 169 to 326 (GFLTVSTNPF…NWRKDFTVNL (158 aa)) form a donor-binding region. Residues 327-359 (PRFWESHACLACDHVKRHQEYKSVGNLEKWFWN) form an acceptor-binding region.

It belongs to the glycosyltransferase 10 family. In terms of assembly, homodimer. In terms of processing, N-glycosylated with complex-type N-glycans.

Its subcellular location is the golgi apparatus. It localises to the trans-Golgi network membrane. The protein resides in the golgi apparatus membrane. It catalyses the reaction a beta-D-galactosyl-(1-&gt;4)-N-acetyl-beta-D-glucosaminyl derivative + GDP-beta-L-fucose = a beta-D-galactosyl-(1-&gt;4)-[alpha-L-fucosyl-(1-&gt;3)]-N-acetyl-beta-D-glucosaminyl derivative + GDP + H(+). It carries out the reaction an alpha-Neu5Ac-(2-&gt;3)-beta-D-Gal-(1-&gt;4)-beta-D-GlcNAc-(1-&gt;3)-beta-D-Gal-(1-&gt;4)-beta-D-GlcNAc derivative + GDP-beta-L-fucose = an alpha-Neu5Ac-(2-&gt;3)-beta-D-Gal-(1-&gt;4)-beta-D-GlcNAc-(1-&gt;3)-beta-D-Gal-(1-&gt;4)-[alpha-L-Fuc-(1-&gt;3)]-beta-D-GlcNAc derivative + GDP + H(+). The enzyme catalyses alpha-N-glycoloylneuraminosyl-(2-&gt;3)-beta-D-galactosyl-(1-&gt;4)-N-acetyl-beta-D-glucosaminyl-(1-&gt;3)-beta-D-galactosyl-(1-&gt;4)-N-acetyl-beta-D-glucosaminyl-(1-&gt;3)-beta-D-galactosyl-(1-&gt;4)-beta-D-glucosyl-(1&lt;-&gt;1')-ceramide + GDP-beta-L-fucose = alpha-N-glycoloylneuraminosyl-(2-&gt;3)-beta-D-galactosyl-(1-&gt;4)-N-acetyl-beta-D-glucosaminyl-(1-&gt;3)-beta-D-galactosyl-(1-&gt;4)-[alpha-L-fucosyl-(1-&gt;3)]-N-acetyl-beta-D-glucosaminyl-(1-&gt;3)-beta-D-galactosyl-(1-&gt;4)-beta-D-glucosyl-(1&lt;-&gt;1')-ceramide + GDP + H(+). The catalysed reaction is alpha-D-galactosyl-(1-&gt;3)-beta-D-galactosyl-(1-&gt;4)-N-acetyl-beta-D-glucosaminyl-(1-&gt;3)-beta-D-galactosyl-(1-&gt;4)-beta-D-glucosyl-(1&lt;-&gt;1')-ceramide + GDP-beta-L-fucose = a neolactoside IV(3)-alpha-Gal,III(3)-alpha-Fuc-nLc4Cer + GDP + H(+). It catalyses the reaction a neolactoside nLc4Cer + GDP-beta-L-fucose = a neolactoside III(3)-alpha-Fuc-nLc4Cer + GDP + H(+). It carries out the reaction an N-acetyl-alpha-neuraminyl-(2-&gt;3)-beta-D-galactosyl-(1-&gt;4)-N-acetyl-beta-D-glucosaminyl derivative + GDP-beta-L-fucose = an alpha-Neu5Ac-(2-&gt;3)-beta-D-Gal-(1-&gt;4)-[alpha-L-Fuc-(1-&gt;3)]-beta-D-GlcNAc derivative + GDP + H(+). The enzyme catalyses beta-D-Gal-(1-&gt;4)-beta-D-GlcNAc-(1-&gt;3)-beta-D-Gal-(1-&gt;4)-D-Glc + GDP-beta-L-fucose = beta-D-Gal-(1-&gt;4)-[alpha-L-Fuc-(1-&gt;3)]-beta-D-GlcNAc-(1-&gt;3)-beta-D-Gal-(1-&gt;4)-D-Glc + GDP + H(+). The catalysed reaction is an alpha-L-Fuc-(1-&gt;2)-beta-D-Gal-(1-&gt;4)-beta-D-GlcNAc derivative + GDP-beta-L-fucose = an alpha-L-Fuc-(1-&gt;2)-beta-D-Gal-(1-&gt;4)-[alpha-L-Fuc-(1-&gt;3)]-beta-D-GlcNAc derivative + GDP + H(+). It participates in protein modification; protein glycosylation. The protein operates within glycolipid biosynthesis. Its activity is regulated as follows. Activated by Mn2+. In terms of biological role, catalyzes alpha(1-&gt;3) linkage of fucosyl moiety transferred from GDP-beta-L-fucose to N-acetyl glucosamine (GlcNAc) within type 2 lactosamine (LacNAc, beta-D-Gal-(1-&gt;4)-beta-D-GlcNAc-) glycan attached to glycolipids and N- or O-linked glycoproteins. Fucosylates distal type 2 LacNAc and its fucosylated (H-type 2 LacNAc) and sialylated (sialyl-type 2 LacNAc) derivatives to form Lewis x (Lex) (CD15) and Lewis y (Ley) antigenic epitopes involved in cell adhesion and differentiation. Generates Lex epitopes in the brain, presumably playing a role in the maintenance of neuronal stemness and neurite outgrowth in progenitor neural cells. Fucosylates the internal type 2 LacNAc unit of the polylactosamine chain to form VIM-2 antigen that serves as recognition epitope for SELE. Can also modify milk oligosaccharides in particular type 2 tetrasaccharide LNnT. This Bos taurus (Bovine) protein is 4-galactosyl-N-acetylglucosaminide 3-alpha-L-fucosyltransferase 9.